The chain runs to 187 residues: dTTP/UTP pyrophosphatase (187 aa).

Residue Asp68 is the Proton acceptor of the active site.

The protein belongs to the Maf family. YhdE subfamily. It depends on a divalent metal cation as a cofactor.

The protein resides in the cytoplasm. The enzyme catalyses dTTP + H2O = dTMP + diphosphate + H(+). The catalysed reaction is UTP + H2O = UMP + diphosphate + H(+). Functionally, nucleoside triphosphate pyrophosphatase that hydrolyzes dTTP and UTP. May have a dual role in cell division arrest and in preventing the incorporation of modified nucleotides into cellular nucleic acids. In Thermus thermophilus (strain ATCC BAA-163 / DSM 7039 / HB27), this protein is dTTP/UTP pyrophosphatase.